A 420-amino-acid chain; its full sequence is MIFDKDNYEEYDREVWEAIHAEEKRQQNNIELIASENVVSKAVMKAQGSILTNKYAEGYPGRRYYGGTDYVDVVESLAIERAKKLFGAKYANVQPHSGSQANAAAYMALIKPGDTVMGLDLAAGGHLTHGSPVSFSGQTYNFIAYNVDPETEVLNYEQILKQAEEVQPKLIVAGASAYSHIIDFKKFRDIADQVGAKLMVDMAHIAGLVAAGLHPNPLPYAHITTTTTHKTLRGPRGGLVLTNDEDLAKKINSAIFPGLQGGPLEHIVAAKAITFKENLDPAFKVYAQKIIENCQAMVEVFNAHEKFRVVSGASENHLFLVDVTQVVENGKVAQNILDDVHITLNKNSIPFEKLSPFKTSGIRIGTAAVTARGFGPEECRKVAELIVKTLENTENEAVLEEVRQEVKLLTDAFPLYENLV.

(6S)-5,6,7,8-tetrahydrofolate contacts are provided by residues Leu-121 and 125–127 (GHL). Position 230 is an N6-(pyridoxal phosphate)lysine (Lys-230). 355 to 357 (SPF) contributes to the (6S)-5,6,7,8-tetrahydrofolate binding site.

This sequence belongs to the SHMT family. In terms of assembly, homodimer. It depends on pyridoxal 5'-phosphate as a cofactor.

The protein resides in the cytoplasm. The enzyme catalyses (6R)-5,10-methylene-5,6,7,8-tetrahydrofolate + glycine + H2O = (6S)-5,6,7,8-tetrahydrofolate + L-serine. It participates in one-carbon metabolism; tetrahydrofolate interconversion. It functions in the pathway amino-acid biosynthesis; glycine biosynthesis; glycine from L-serine: step 1/1. Its function is as follows. Catalyzes the reversible interconversion of serine and glycine with tetrahydrofolate (THF) serving as the one-carbon carrier. This reaction serves as the major source of one-carbon groups required for the biosynthesis of purines, thymidylate, methionine, and other important biomolecules. Also exhibits THF-independent aldolase activity toward beta-hydroxyamino acids, producing glycine and aldehydes, via a retro-aldol mechanism. The polypeptide is Serine hydroxymethyltransferase (Streptococcus mutans serotype c (strain ATCC 700610 / UA159)).